The following is a 352-amino-acid chain: tRNA N6-adenosine threonylcarbamoyltransferase (352 aa).

2 residues coordinate Fe cation: H111 and H115. Residues 133–137 (LASGG), D166, G179, and N275 each bind substrate. Residue D300 coordinates Fe cation.

Belongs to the KAE1 / TsaD family. Requires Fe(2+) as cofactor.

It is found in the cytoplasm. It catalyses the reaction L-threonylcarbamoyladenylate + adenosine(37) in tRNA = N(6)-L-threonylcarbamoyladenosine(37) in tRNA + AMP + H(+). Functionally, required for the formation of a threonylcarbamoyl group on adenosine at position 37 (t(6)A37) in tRNAs that read codons beginning with adenine. Is involved in the transfer of the threonylcarbamoyl moiety of threonylcarbamoyl-AMP (TC-AMP) to the N6 group of A37, together with TsaE and TsaB. TsaD likely plays a direct catalytic role in this reaction. The sequence is that of tRNA N6-adenosine threonylcarbamoyltransferase from Treponema pallidum (strain Nichols).